The sequence spans 917 residues: Protein translocase subunit SecA (917 aa).

ATP is bound by residues Gln-87, 105-109 (GEGKT), and Asp-516. The Zn(2+) site is built by Cys-901, Cys-903, Cys-912, and His-913.

It belongs to the SecA family. Monomer and homodimer. Part of the essential Sec protein translocation apparatus which comprises SecA, SecYEG and auxiliary proteins SecDF-YajC and YidC. Requires Zn(2+) as cofactor.

The protein localises to the cell inner membrane. It localises to the cytoplasm. It catalyses the reaction ATP + H2O + cellular proteinSide 1 = ADP + phosphate + cellular proteinSide 2.. Part of the Sec protein translocase complex. Interacts with the SecYEG preprotein conducting channel. Has a central role in coupling the hydrolysis of ATP to the transfer of proteins into and across the cell membrane, serving both as a receptor for the preprotein-SecB complex and as an ATP-driven molecular motor driving the stepwise translocation of polypeptide chains across the membrane. This Acidovorax ebreus (strain TPSY) (Diaphorobacter sp. (strain TPSY)) protein is Protein translocase subunit SecA.